Reading from the N-terminus, the 1007-residue chain is Aldehyde reductase lnbA (1007 aa).

The adenylation (A) domain stretch occupies residues 35-428 (QVRQSPSSIA…GRVDHQIKVR (394 aa)). A Carrier domain is found at 540-617 (TLCQDTQTVL…ALASIIDHAK (78 aa)). Serine 577 carries the O-(pantetheine 4'-phosphoryl)serine modification. The short-chain dehydrogenase/reductase (R) domain stretch occupies residues 659 to 998 (IFITGATGFV…PTLDCSLLKK (340 aa)).

Belongs to the NRP synthetase family.

The catalysed reaction is L-tyrosinal + AMP + diphosphate + NADP(+) = L-tyrosine + ATP + NADPH + H(+). It functions in the pathway secondary metabolite biosynthesis. Its function is as follows. Non-canonical nonribosomal peptide synthetase; part of the lnb gene cluster that mediates the biosynthesis of diastereomeric piperazines. Lna and lnb clusters encode sets of enzymes that produce overlapping sets of previously undescribed metabolites such as piperazinomycin-like metabolites or morpholine. The lna and lnb biosynthetic pathways appear to be part of a signaling network that controls the formation of sclerotia, a resilient overwintering structure. One primary function of the non-canonical nonribosomal peptide synthetases lnaA and lnbA consists in the reduction of L-tyrosine. The presence in the clusters of tailoring enzymes such as the oxidoreductases lnaB, lnbB, lnaE or lnbE, as well as of the cytochrome P450 monooxygenases lnaC, lnaD, or lnbC, might explain formation of various diastereomeric piperazines. The chain is Aldehyde reductase lnbA from Aspergillus flavus (strain ATCC 200026 / FGSC A1120 / IAM 13836 / NRRL 3357 / JCM 12722 / SRRC 167).